A 745-amino-acid polypeptide reads, in one-letter code: Serine/threonine-protein kinase BUR1 (745 aa).

Positions 1–21 (MSVIAGHHVPRSNDQRQYDTP) are disordered. One can recognise a Protein kinase domain in the interval 44 to 349 (YEVIEKLGQG…ALDALNHKFF (306 aa)). ATP contacts are provided by residues 50-58 (LGQGTFGVV) and Lys-73. The Proton acceptor role is filled by Asp-179. Composition is skewed to basic and acidic residues over residues 380–406 (DKEQAVSELKPPTEIRYDNHSESRYNA), 428–475 (DYID…DIQN), and 493–508 (KLREHSGTESLSKKYD). The interval 380–701 (DKEQAVSELK…EVSDLEEDSD (322 aa)) is disordered. Over residues 516-534 (SRGSKSPSPSKLSSISQSK) the composition is skewed to low complexity. Basic and acidic residues predominate over residues 547–557 (ASRESSLERKQ). 2 stretches are compositionally biased toward polar residues: residues 558–567 (VSNGIRTTTD) and 586–598 (LTSNSTQAQPTRN). Basic and acidic residues predominate over residues 599–631 (KSVERPKDLEKPTNGVTEDRNKKPVLEEKKEVV). Low complexity predominate over residues 632–660 (KPNLAIPKIKKSSSLVSLSSRSSTTPVIS). The span at 661 to 674 (NPSKVTKRAASSVT) shows a compositional bias: polar residues. Positions 692 to 701 (EVSDLEEDSD) are enriched in acidic residues.

This sequence belongs to the protein kinase superfamily. CMGC Ser/Thr protein kinase family. CDC2/CDKX subfamily.

Its subcellular location is the nucleus. It carries out the reaction L-seryl-[protein] + ATP = O-phospho-L-seryl-[protein] + ADP + H(+). It catalyses the reaction L-threonyl-[protein] + ATP = O-phospho-L-threonyl-[protein] + ADP + H(+). The enzyme catalyses [DNA-directed RNA polymerase] + ATP = phospho-[DNA-directed RNA polymerase] + ADP + H(+). Functionally, serine/threonine-protein kinase involved in transcription regulation. Phosphorylates the UBC2/RAD6 ubiquitin-conjugating enzyme (E2), leading to monoubiquitination of histone H2B and the silencing of telomeric-associated genes. Also required for histone H3 methylation. Necessary for the recovery from pheromone-induced growth arrest in the cell cycle G1 phase. Required for pseudohyphal growth and virulence in mice. The polypeptide is Serine/threonine-protein kinase BUR1 (CRK1) (Candida albicans (strain SC5314 / ATCC MYA-2876) (Yeast)).